Here is a 393-residue protein sequence, read N- to C-terminus: Arginine biosynthesis bifunctional protein ArgJ (393 aa).

6 residues coordinate substrate: Thr145, Lys171, Thr182, Glu265, Asn388, and Ser393. Residue Thr182 is the Nucleophile of the active site.

It belongs to the ArgJ family. Heterotetramer of two alpha and two beta chains.

It is found in the cytoplasm. It catalyses the reaction N(2)-acetyl-L-ornithine + L-glutamate = N-acetyl-L-glutamate + L-ornithine. The enzyme catalyses L-glutamate + acetyl-CoA = N-acetyl-L-glutamate + CoA + H(+). Its pathway is amino-acid biosynthesis; L-arginine biosynthesis; L-ornithine and N-acetyl-L-glutamate from L-glutamate and N(2)-acetyl-L-ornithine (cyclic): step 1/1. The protein operates within amino-acid biosynthesis; L-arginine biosynthesis; N(2)-acetyl-L-ornithine from L-glutamate: step 1/4. In terms of biological role, catalyzes two activities which are involved in the cyclic version of arginine biosynthesis: the synthesis of N-acetylglutamate from glutamate and acetyl-CoA as the acetyl donor, and of ornithine by transacetylation between N(2)-acetylornithine and glutamate. This Nitratidesulfovibrio vulgaris (strain ATCC 29579 / DSM 644 / CCUG 34227 / NCIMB 8303 / VKM B-1760 / Hildenborough) (Desulfovibrio vulgaris) protein is Arginine biosynthesis bifunctional protein ArgJ.